The sequence spans 69 residues: Sec-independent protein translocase protein TatA (69 aa).

A helical transmembrane segment spans residues 1–21 (MFGLGGQELVLILLIVLLLFG). The segment covering 47-63 (EEEFNKSMDDNPKKEKA) has biased composition (basic and acidic residues). The tract at residues 47-69 (EEEFNKSMDDNPKKEKATTASKS) is disordered.

The protein belongs to the TatA/E family. In terms of assembly, forms a complex with TatC.

The protein resides in the cell inner membrane. Its function is as follows. Part of the twin-arginine translocation (Tat) system that transports large folded proteins containing a characteristic twin-arginine motif in their signal peptide across membranes. TatA could form the protein-conducting channel of the Tat system. The protein is Sec-independent protein translocase protein TatA of Chlorobium chlorochromatii (strain CaD3).